The sequence spans 741 residues: Polyribonucleotide nucleotidyltransferase (741 aa).

Residues Asp-489 and Asp-495 each contribute to the Mg(2+) site. The region spanning 556-615 is the KH domain; the sequence is PKIDSIQIPVDKIKVVIGKGGETIDKIIAETGVTIDIDEEGLVQIFSSDQDAIDRAKTII. An S1 motif domain is found at 625–693; it reads GEVYTVPVVR…EKGRVDASIK (69 aa). Residues 696–741 are disordered; that stretch reads LPKPEKNEDGENGEEHRHCCCSHHKPDHHSESMEAPKKSDESETKE. Basic and acidic residues-rich tracts occupy residues 698-713 and 723-741; these read KPEK…EHRH and HHSE…ETKE.

It belongs to the polyribonucleotide nucleotidyltransferase family. Requires Mg(2+) as cofactor.

The protein localises to the cytoplasm. The enzyme catalyses RNA(n+1) + phosphate = RNA(n) + a ribonucleoside 5'-diphosphate. Functionally, involved in mRNA degradation. Catalyzes the phosphorolysis of single-stranded polyribonucleotides processively in the 3'- to 5'-direction. The protein is Polyribonucleotide nucleotidyltransferase of Streptococcus thermophilus (strain ATCC BAA-491 / LMD-9).